The primary structure comprises 654 residues: MESSAVVPGTTAPLLPYAYAPLPSSADDARENQSSGGVRWRVCAAVLAASALAVLIVVGLLAGGRVDRGPAGGDVASAAVPAVPMEIPRSRGKDFGVSEKASGAYSADGGFPWSNAMLQWQRTGFHFQPEKHYMNDPNGPVYYGGWYHLFYQYNPKGDSWGNIAWAHAVSKDMVNWRHLPLAMVPDQWYDSNGVLTGSITVLPDGQVILLYTGNTDTLAQVQCLATPADPSDPLLREWIKHPANPILYPPPGIGLKDFRDPLTAWFDHSDNTWRTVIGSKDDDGHAGIILSYKTKDFVNYELMPGNMHRGPDGTGMYECIDLYPVGGNSSEMLGGDDSPDVLFVLKESSDDERHDYYALGRFDAAANIWTPIDQELDLGIGLRYDWGKYYASKSFYDQKKNRRIVWAYIGETDSEQADITKGWANLMTIPRTVELDKKTRTNLIQWPVEELDTLRRNSTDLSGITVDAGSVIRLPLHQGAQIDIEASFQLNSSDVDALTEADVSYNCSTSGAAVRGALGPFGLLVLANGRTEQTAVYFYVSKGVDGALQTHFCHDESRSTQAKDVVNRMIGSIVPVLDGETFSVRVLVDHSIVQSFAMGGRITATSRAYPTEAIYAAAGVYLFNNATGATVTAERLVVYEMASADNHIFTNDDL.

The propeptide occupies 1-106 (MESSAVVPGT…VSEKASGAYS (106 aa)). A glycan (N-linked (GlcNAc...) asparagine) is linked at Asn-32. The active site involves Asp-136. N-linked (GlcNAc...) asparagine glycosylation is found at Asn-328, Asn-457, Asn-491, Asn-506, and Asn-625.

The protein belongs to the glycosyl hydrolase 32 family. As to quaternary structure, monomer. As to expression, accumulates at the base of growing leaves.

Its subcellular location is the vacuole. The catalysed reaction is 2 sucrose = 1(F)-beta-D-fructosylsucrose + D-glucose. Functionally, transferase involved in fructan biosynthesis that catalyzes the production of 1-kestose (fructose and nystose to a lower extent) from sucrose. Also exhibits some hydrolase activity toward 1-kestose, thus producing fructose and sucrose. A weak fructosyltransferase activity leads to the formation of nystose from 1-kestose. The protein is Sucrose:sucrose 1-fructosyltransferase (1-SST) of Festuca arundinacea (Tall fescue).